Consider the following 605-residue polypeptide: Elongation factor 4 (605 aa).

The region spanning 9-192 is the tr-type G domain; sequence SRTRNFCIIA…AIIARIPSPK (184 aa). Residues 21–26 and 139–142 contribute to the GTP site; these read DHGKST and NKID.

The protein belongs to the TRAFAC class translation factor GTPase superfamily. Classic translation factor GTPase family. LepA subfamily.

It is found in the cell inner membrane. The catalysed reaction is GTP + H2O = GDP + phosphate + H(+). Its function is as follows. Required for accurate and efficient protein synthesis under certain stress conditions. May act as a fidelity factor of the translation reaction, by catalyzing a one-codon backward translocation of tRNAs on improperly translocated ribosomes. Back-translocation proceeds from a post-translocation (POST) complex to a pre-translocation (PRE) complex, thus giving elongation factor G a second chance to translocate the tRNAs correctly. Binds to ribosomes in a GTP-dependent manner. This Chlorobium limicola (strain DSM 245 / NBRC 103803 / 6330) protein is Elongation factor 4.